The sequence spans 121 residues: Large ribosomal subunit protein eL34B (121 aa).

It belongs to the eukaryotic ribosomal protein eL34 family. As to quaternary structure, component of the large ribosomal subunit (LSU). Mature yeast ribosomes consist of a small (40S) and a large (60S) subunit. The 40S small subunit contains 1 molecule of ribosomal RNA (18S rRNA) and 33 different proteins (encoded by 57 genes). The large 60S subunit contains 3 rRNA molecules (25S, 5.8S and 5S rRNA) and 46 different proteins (encoded by 81 genes).

Its subcellular location is the cytoplasm. Its function is as follows. Component of the ribosome, a large ribonucleoprotein complex responsible for the synthesis of proteins in the cell. The small ribosomal subunit (SSU) binds messenger RNAs (mRNAs) and translates the encoded message by selecting cognate aminoacyl-transfer RNA (tRNA) molecules. The large subunit (LSU) contains the ribosomal catalytic site termed the peptidyl transferase center (PTC), which catalyzes the formation of peptide bonds, thereby polymerizing the amino acids delivered by tRNAs into a polypeptide chain. The nascent polypeptides leave the ribosome through a tunnel in the LSU and interact with protein factors that function in enzymatic processing, targeting, and the membrane insertion of nascent chains at the exit of the ribosomal tunnel. In Saccharomyces cerevisiae (strain ATCC 204508 / S288c) (Baker's yeast), this protein is Large ribosomal subunit protein eL34B.